Here is a 623-residue protein sequence, read N- to C-terminus: Stretch-activated cation channel MID1 (623 aa).

Residues 1–57 (MPAREVYLKRPATRRQLEGICTRYDGQQRITQLDCEEGCSKRTQPPQRLNPRYKSPD) lie on the Extracellular side of the membrane. A helical membrane pass occupies residues 58–78 (LIHISFIIVLLCILSMTSSVV). Topologically, residues 79 to 623 (AQTTTGSSSS…DRWGNRWCNG (545 aa)) are cytoplasmic. The segment covering 524 to 536 (TSTSSGTFPTPST) has biased composition (low complexity). The segment at 524–544 (TSTSSGTFPTPSTVLRTPSSP) is disordered. A required for targeting to the cell membrane region spans residues 600-623 (SYGDGSAAQGVAAQDRWGNRWCNG).

Forms an oligomer by disulfide bonds. Interacts with CCH1 to form a Ca(2+) influx channel. Interacts (via C-terminus) with CCP1/cytochrome c peroxidase; the interaction may contribute to cellular detoxification of radicals.

The protein localises to the cell membrane. Functionally, calcium-permeable, cation-selective stretch-activated channel (SAC) that functions together with CCH1 to mediate calcium entry into cells. May additionally play a role in cellular detoxification of radicals. The protein is Stretch-activated cation channel MID1 of Cryptococcus neoformans var. grubii serotype A (strain H99 / ATCC 208821 / CBS 10515 / FGSC 9487) (Filobasidiella neoformans var. grubii).